The following is a 510-amino-acid chain: Maturase K (510 aa).

Belongs to the intron maturase 2 family. MatK subfamily.

The protein localises to the plastid. Its subcellular location is the chloroplast. Functionally, usually encoded in the trnK tRNA gene intron. Probably assists in splicing its own and other chloroplast group II introns. The sequence is that of Maturase K from Populus alba (White poplar).